Reading from the N-terminus, the 150-residue chain is Large ribosomal subunit protein bL9 (150 aa).

This sequence belongs to the bacterial ribosomal protein bL9 family.

Binds to the 23S rRNA. In Polaromonas naphthalenivorans (strain CJ2), this protein is Large ribosomal subunit protein bL9.